Here is a 267-residue protein sequence, read N- to C-terminus: Taurine import ATP-binding protein TauB (267 aa).

Residues 6–238 (FNEASLIYPA…DILAGAPASE (233 aa)) enclose the ABC transporter domain. ATP is bound at residue 43 to 50 (GRSGSGKT).

Belongs to the ABC transporter superfamily. Taurine importer (TC 3.A.1.17.1) family. The complex is composed of two ATP-binding proteins (TauB), two transmembrane proteins (TauC) and a solute-binding protein (TauA).

The protein resides in the cell inner membrane. The enzyme catalyses taurine(out) + ATP + H2O = taurine(in) + ADP + phosphate + H(+). Its function is as follows. Part of the ABC transporter complex TauABC involved in taurine import. Responsible for energy coupling to the transport system. The sequence is that of Taurine import ATP-binding protein TauB from Sinorhizobium fredii (strain NBRC 101917 / NGR234).